Consider the following 504-residue polypeptide: D-alanine--D-alanyl carrier protein ligase (504 aa).

Residue 152 to 153 (TS) coordinates ATP. Aspartate 197 contacts D-alanine. 292 to 297 (NTYGPT) contributes to the ATP binding site. Residue valine 301 participates in D-alanine binding. ATP contacts are provided by residues aspartate 383, 394–397 (YNGR), and lysine 492. Lysine 492 is a binding site for D-alanine.

The protein belongs to the ATP-dependent AMP-binding enzyme family. DltA subfamily.

It is found in the cytoplasm. The catalysed reaction is holo-[D-alanyl-carrier protein] + D-alanine + ATP = D-alanyl-[D-alanyl-carrier protein] + AMP + diphosphate. Its pathway is cell wall biogenesis; lipoteichoic acid biosynthesis. Its function is as follows. Catalyzes the first step in the D-alanylation of lipoteichoic acid (LTA), the activation of D-alanine and its transfer onto the D-alanyl carrier protein (Dcp) DltC. In an ATP-dependent two-step reaction, forms a high energy D-alanyl-AMP intermediate, followed by transfer of the D-alanyl residue as a thiol ester to the phosphopantheinyl prosthetic group of the Dcp. D-alanylation of LTA plays an important role in modulating the properties of the cell wall in Gram-positive bacteria, influencing the net charge of the cell wall. The sequence is that of D-alanine--D-alanyl carrier protein ligase from Bacillus cytotoxicus (strain DSM 22905 / CIP 110041 / 391-98 / NVH 391-98).